An 87-amino-acid chain; its full sequence is Omega-lycotoxin-Am1a (87 aa).

Positions 1–17 (MKLSIFFVLFFIAIAYC) are cleaved as a signal peptide. The propeptide occupies 18-40 (QPEFLDDEEDEVEETLPVAEEGR). 4 cysteine pairs are disulfide-bonded: Cys44–Cys59, Cys51–Cys64, Cys58–Cys84, and Cys66–Cys82.

Belongs to the neurotoxin omega-lctx family. As to expression, expressed by the venom gland.

It localises to the secreted. In terms of biological role, modulates Cav2.1/CACNA1A voltage-gated calcium channels (P/Q-type currents) in rat cerebellar Purkinje cells and hippocampal CA1-CA3 neurons. At saturating concentrations (&gt;10 nM) decelerates activation kinetics and slightly increases peak amplitude without affecting deactivation kinetics. In vivo, does not cause death when intravenously injected into mice. In rat models, through its activity on Cav2.1/CACNA1A, has an ameliorative effect on memory defects provoked by hyperstimulation of N-methyl-D-aspartate receptors (NMDARs) in the hippocampus. This chain is Omega-lycotoxin-Am1a, found in Alopecosa marikovskyi (Wolf spider).